Consider the following 228-residue polypeptide: L-ribulose-5-phosphate 4-epimerase UlaF (228 aa).

Substrate-binding positions include 26 to 27 (GN), 43 to 44 (SG), and 72 to 73 (SS). Zn(2+)-binding residues include D74, H93, and H95. Catalysis depends on D118, which acts as the Proton donor/acceptor. H167 lines the Zn(2+) pocket. Y225 serves as the catalytic Proton donor/acceptor.

It belongs to the aldolase class II family. AraD/FucA subfamily. Zn(2+) serves as cofactor.

It carries out the reaction L-ribulose 5-phosphate = D-xylulose 5-phosphate. Its pathway is cofactor degradation; L-ascorbate degradation; D-xylulose 5-phosphate from L-ascorbate: step 4/4. Functionally, catalyzes the isomerization of L-ribulose 5-phosphate to D-xylulose 5-phosphate. Is involved in the anaerobic L-ascorbate utilization. The chain is L-ribulose-5-phosphate 4-epimerase UlaF from Escherichia coli O139:H28 (strain E24377A / ETEC).